The chain runs to 68 residues: UPF0253 protein ASA_2184 (68 aa).

The protein belongs to the UPF0253 family.

The protein is UPF0253 protein ASA_2184 of Aeromonas salmonicida (strain A449).